The sequence spans 175 residues: uncharacterized protein (175 aa).

Disordered regions lie at residues 68-111 and 154-175; these read NKSN…DDDQ and PERA…KLTT. Positions 95 to 106 are enriched in low complexity; sequence EEQPMMPYQQPP.

The protein belongs to the asfivirus H171R family.

Its subcellular location is the virion. This is an uncharacterized protein from African swine fever virus (isolate Pig/Kenya/KEN-50/1950) (ASFV).